Consider the following 343-residue polypeptide: Aspartate carbamoyltransferase catalytic subunit (343 aa).

Arg-91 and Thr-92 together coordinate carbamoyl phosphate. Residue Lys-119 coordinates L-aspartate. Carbamoyl phosphate is bound by residues Arg-141, His-171, and Gln-174. L-aspartate-binding residues include Arg-204 and Arg-259. Positions 300 and 301 each coordinate carbamoyl phosphate.

This sequence belongs to the aspartate/ornithine carbamoyltransferase superfamily. ATCase family. As to quaternary structure, heterododecamer (2C3:3R2) of six catalytic PyrB chains organized as two trimers (C3), and six regulatory PyrI chains organized as three dimers (R2).

The enzyme catalyses carbamoyl phosphate + L-aspartate = N-carbamoyl-L-aspartate + phosphate + H(+). Its pathway is pyrimidine metabolism; UMP biosynthesis via de novo pathway; (S)-dihydroorotate from bicarbonate: step 2/3. Catalyzes the condensation of carbamoyl phosphate and aspartate to form carbamoyl aspartate and inorganic phosphate, the committed step in the de novo pyrimidine nucleotide biosynthesis pathway. This is Aspartate carbamoyltransferase catalytic subunit from Burkholderia mallei (strain NCTC 10247).